Consider the following 100-residue polypeptide: MSNTKHTTSHHMELKRIIILTLLFILIMLIFRNSVSFKMTFQELLPRFYKKNSNSVSNNNRPSSIFSENLVDFDDVNMVDKTRLFIFLFFSFIITIPFMV.

2 helical membrane passes run 17 to 37 (IIIL…SVSF) and 78 to 98 (MVDK…TIPF).

It localises to the endoplasmic reticulum membrane. This is an uncharacterized protein from Saccharomyces cerevisiae (strain ATCC 204508 / S288c) (Baker's yeast).